The chain runs to 439 residues: uncharacterized protein (439 aa).

The YcaO domain occupies 116–439 (GKAASYRAAQ…PMRTPLQEAE (324 aa)).

This is an uncharacterized protein from Mycobacterium tuberculosis (strain CDC 1551 / Oshkosh).